The primary structure comprises 616 residues: uncharacterized protein (616 aa).

This is an uncharacterized protein from Methanocaldococcus jannaschii (strain ATCC 43067 / DSM 2661 / JAL-1 / JCM 10045 / NBRC 100440) (Methanococcus jannaschii).